The chain runs to 369 residues: Uroporphyrinogen decarboxylase (369 aa).

Substrate is bound by residues 28 to 32 (RQAGR), D78, Y154, S209, and H339.

The protein belongs to the uroporphyrinogen decarboxylase family. Homodimer.

The protein localises to the cytoplasm. It carries out the reaction uroporphyrinogen III + 4 H(+) = coproporphyrinogen III + 4 CO2. It functions in the pathway porphyrin-containing compound metabolism; protoporphyrin-IX biosynthesis; coproporphyrinogen-III from 5-aminolevulinate: step 4/4. In terms of biological role, catalyzes the decarboxylation of four acetate groups of uroporphyrinogen-III to yield coproporphyrinogen-III. This chain is Uroporphyrinogen decarboxylase, found in Polaromonas naphthalenivorans (strain CJ2).